A 143-amino-acid chain; its full sequence is Transcriptional regulator MraZ (143 aa).

2 consecutive SpoVT-AbrB domains span residues 5-47 and 76-119; these read EYQH…PQEE and ASEC…SKSE.

It belongs to the MraZ family. Forms oligomers.

The protein localises to the cytoplasm. It localises to the nucleoid. This Listeria welshimeri serovar 6b (strain ATCC 35897 / DSM 20650 / CCUG 15529 / CIP 8149 / NCTC 11857 / SLCC 5334 / V8) protein is Transcriptional regulator MraZ.